An 82-amino-acid polypeptide reads, in one-letter code: MTAAFTVRVKDETASKLDQLAEKLDRSRSYMAAEAIEAFVEQQEWQLAEIEAGLTEADRGEFASDEDVAKVVRKYVKSARQS.

This is an uncharacterized protein from Sinorhizobium fredii (strain NBRC 101917 / NGR234).